Consider the following 311-residue polypeptide: Elongation factor Ts (311 aa).

Residues 81–84 (TDFV) form an involved in Mg(2+) ion dislocation from EF-Tu region.

The protein belongs to the EF-Ts family.

It is found in the cytoplasm. Associates with the EF-Tu.GDP complex and induces the exchange of GDP to GTP. It remains bound to the aminoacyl-tRNA.EF-Tu.GTP complex up to the GTP hydrolysis stage on the ribosome. In Trichlorobacter lovleyi (strain ATCC BAA-1151 / DSM 17278 / SZ) (Geobacter lovleyi), this protein is Elongation factor Ts.